The sequence spans 144 residues: uncharacterized protein (144 aa).

A compositionally biased stretch (basic residues) spans 124–133 (KALNRKKSKT). Positions 124 to 144 (KALNRKKSKTKNGEKNGEGKS) are disordered. A compositionally biased stretch (basic and acidic residues) spans 134 to 144 (KNGEKNGEGKS).

This is an uncharacterized protein from Acidianus filamentous virus 1 (isolate United States/Yellowstone) (AFV-1).